We begin with the raw amino-acid sequence, 132 residues long: Small ribosomal subunit protein uS8 (132 aa).

The protein belongs to the universal ribosomal protein uS8 family. As to quaternary structure, part of the 30S ribosomal subunit. Contacts proteins S5 and S12.

In terms of biological role, one of the primary rRNA binding proteins, it binds directly to 16S rRNA central domain where it helps coordinate assembly of the platform of the 30S subunit. The chain is Small ribosomal subunit protein uS8 from Rhizobium meliloti (strain 1021) (Ensifer meliloti).